Reading from the N-terminus, the 513-residue chain is ATP synthase subunit alpha (513 aa).

170–177 provides a ligand contact to ATP; that stretch reads GDRQTGKT.

This sequence belongs to the ATPase alpha/beta chains family. In terms of assembly, F-type ATPases have 2 components, CF(1) - the catalytic core - and CF(0) - the membrane proton channel. CF(1) has five subunits: alpha(3), beta(3), gamma(1), delta(1), epsilon(1). CF(0) has three main subunits: a(1), b(2) and c(9-12). The alpha and beta chains form an alternating ring which encloses part of the gamma chain. CF(1) is attached to CF(0) by a central stalk formed by the gamma and epsilon chains, while a peripheral stalk is formed by the delta and b chains.

It is found in the cell inner membrane. The enzyme catalyses ATP + H2O + 4 H(+)(in) = ADP + phosphate + 5 H(+)(out). Functionally, produces ATP from ADP in the presence of a proton gradient across the membrane. The alpha chain is a regulatory subunit. The chain is ATP synthase subunit alpha from Teredinibacter turnerae (strain ATCC 39867 / T7901).